Consider the following 31-residue polypeptide: Cyclotide mden-N (31 aa).

The segment at residues 1–31 is a cross-link (cyclopeptide (Gly-Asn)); the sequence is GTIPCGESCVYIPCLTSALGCSCKNKVCYRN. 3 cysteine pairs are disulfide-bonded: Cys-5/Cys-21, Cys-9/Cys-23, and Cys-14/Cys-28.

This sequence belongs to the cyclotide family. Bracelet subfamily. This is a cyclic peptide.

Functionally, probably participates in a plant defense mechanism. The polypeptide is Cyclotide mden-N (Melicytus dentatus (Tree violet)).